Here is a 323-residue protein sequence, read N- to C-terminus: Ribose 1,5-bisphosphate isomerase (323 aa).

Substrate-binding positions include 22-25 (RGAA) and Arg65. The active-site Proton acceptor is Cys130. Catalysis depends on Asp199, which acts as the Proton donor. Substrate is bound by residues 209–210 (NK) and Lys235. A Glycyl lysine isopeptide (Lys-Gly) (interchain with G-Cter in SAMP2) cross-link involves residue Lys210.

Belongs to the eIF-2B alpha/beta/delta subunits family. R15P isomerase subfamily.

It catalyses the reaction alpha-D-ribose 1,5-bisphosphate = D-ribulose 1,5-bisphosphate. In terms of biological role, catalyzes the isomerization of ribose 1,5-bisphosphate (R15P) to ribulose 1,5-bisphosphate (RuBP), the CO(2) acceptor and substrate for RubisCO. Functions in an archaeal AMP degradation pathway, together with AMP phosphorylase and RubisCO. The chain is Ribose 1,5-bisphosphate isomerase from Haloferax volcanii (strain ATCC 29605 / DSM 3757 / JCM 8879 / NBRC 14742 / NCIMB 2012 / VKM B-1768 / DS2) (Halobacterium volcanii).